The sequence spans 410 residues: Putative ankyrin repeat protein FPV240 (410 aa).

6 ANK repeats span residues Asn33–Tyr62, Asp66–Asp95, Lys100–Val129, Asp133–Ile162, Tyr166–Tyr195, and Pro200–Ile229.

The chain is Putative ankyrin repeat protein FPV240 from Vertebrata (FPV).